The following is a 257-amino-acid chain: Probable amino-acid ABC transporter ATP-binding protein HI_1078 (257 aa).

An ABC transporter domain is found at Leu-4–Leu-244. Residue Gly-36–Thr-43 coordinates ATP.

The protein belongs to the ABC transporter superfamily.

The protein localises to the cell inner membrane. In terms of biological role, probably part of a binding-protein-dependent transport system for an amino acid. Probably responsible for energy coupling to the transport system. This chain is Probable amino-acid ABC transporter ATP-binding protein HI_1078, found in Haemophilus influenzae (strain ATCC 51907 / DSM 11121 / KW20 / Rd).